Consider the following 428-residue polypeptide: MAATIFLTMIVLLLLGFPMMIPLIAGAFIGFLMLFGDLARTETMVQQMLAGIRPASLIAVPMFIFAADIMTRGQSAGRLINVVMAYVGHIRGGLAISTAAACTMFGAVSGSTQATVVAIGSPLRPRMLKAGYKDSFVLALIVNASDIAFLIPPSIGMIIYGVVSSTSIAELFIAGIGPGLLILVLFSAYAYIYAVRNDVPTEPRASWAERARTMRQALWPMGFPVIIIGGIYGGVFSPTEAAAACVLYALVLEVLVFRSMSLADVYDTAKSTGLITAIVFILVGAGAAFSWVISFAQVPQQILGAIGIAEMGPIGVLFVISIAFFIGCMFVDPIVVILVLVPVFAPVVKSVGLDPVLVGTIITLQVAIGSATPPFGCDIFTAIAVFKRPYAEVVRGTPPFILMLLGVSVALIFFPQIALFLRDLAFSK.

12 helical membrane-spanning segments follow: residues 9–29 (MIVLLLLGFPMMIPLIAGAFI), 49–69 (LAGIRPASLIAVPMFIFAADI), 99–119 (AAACTMFGAVSGSTQATVVAI), 139–159 (ALIVNASDIAFLIPPSIGMII), 172–192 (FIAGIGPGLLILVLFSAYAYI), 217–237 (ALWPMGFPVIIIGGIYGGVFS), 242–262 (AAACVLYALVLEVLVFRSMSL), 273–293 (GLITAIVFILVGAGAAFSWVI), 302–322 (ILGAIGIAEMGPIGVLFVISI), 324–344 (FFIGCMFVDPIVVILVLVPVF), 366–386 (VAIGSATPPFGCDIFTAIAVF), and 400–420 (FILMLLGVSVALIFFPQIALF).

This sequence belongs to the TRAP transporter large permease family. The complex comprises the extracytoplasmic solute receptor protein UehA, and the two transmembrane proteins UehB and UehC.

The protein resides in the cell inner membrane. Part of the tripartite ATP-independent periplasmic (TRAP) transport system UehABC, which imports both ectoine and 5-hydroxyectoine as nutrients, and not as osmoprotectants. In Ruegeria pomeroyi (strain ATCC 700808 / DSM 15171 / DSS-3) (Silicibacter pomeroyi), this protein is Ectoine/5-hydroxyectoine TRAP transporter large permease protein UehC.